Here is a 199-residue protein sequence, read N- to C-terminus: Inducible T-cell costimulator (199 aa).

Residues 1-20 (MKSGLWYFFLFCLRIKVLTG) form the signal peptide. Topologically, residues 21–140 (EINGSANYEM…YESQLCCQLK (120 aa)) are extracellular. In terms of domain architecture, Ig-like V-type spans 30–132 (MFIFHNGGVQ…LTGGYLHIYE (103 aa)). 2 cysteine pairs are disulfide-bonded: Cys-42-Cys-109 and Cys-63-Cys-83. 2 N-linked (GlcNAc...) asparagine glycosylation sites follow: Asn-89 and Asn-110. Residues 141-161 (FWLPIGCAAFVVVCILGCILI) form a helical membrane-spanning segment. The Cytoplasmic portion of the chain corresponds to 162-199 (CWLTKKKYSSSVHDPNGEYMFMRAVNTAKKSRLTDVTL).

In terms of assembly, homodimer; disulfide-linked. Interacts with ICOSLG. Interacts with PIK3R1. Interacts with TBK1; this interaction is critical for the maturation of T follicular regulatory cells. N-glycosylated. As to expression, activated T-cells. Highly expressed on tonsillar T-cells, which are closely associated with B-cells in the apical light zone of germinal centers, the site of terminal B-cell maturation. Expressed at lower levels in thymus, lung, lymph node and peripheral blood leukocytes. Expressed in the medulla of fetal and newborn thymus.

The protein localises to the cell membrane. Its subcellular location is the secreted. Functionally, stimulatory receptor expressed in activated or antigen-experienced T-cells that plays an important role in the immune response. Upon binding to its ligand ICOSL expressed on antigen presenting cells (APCs), delivers costimulatory signals that enhances all basic T-cell responses to a foreign antigen, namely proliferation, secretion of lymphokines including IL10, up-regulation of molecules that mediate cell-cell interaction, and effective help for antibody secretion by B-cells. Also acts as a costimulatory receptor critical for the differentiation of T follicular regulatory cells upon immune challenges such as viral infection. Mechanistically, potentiates TCR-induced calcium flux by augmenting PLCG1 activation and actin remodeling. In addition, activates PI3K signaling pathways independently of calcium flux. Essential both for efficient interaction between T and B-cells and for normal antibody responses to T-cell dependent antigens. Prevents the apoptosis of pre-activated T-cells. Plays a critical role in CD40-mediated class switching of immunoglobin isotypes. The polypeptide is Inducible T-cell costimulator (ICOS) (Homo sapiens (Human)).